The primary structure comprises 307 residues: PCP degradation transcriptional activation protein (307 aa).

The HTH lysR-type domain occupies L6–T63. Positions A23–A42 form a DNA-binding region, H-T-H motif.

It belongs to the LysR transcriptional regulatory family.

Its function is as follows. Transcriptional activator for the pcpA, pcpB and pcpE genes for pentachlorophenol (PCP) degradation. Essential for PCP degradation. The chain is PCP degradation transcriptional activation protein (pcpR) from Sphingobium chlorophenolicum.